Reading from the N-terminus, the 109-residue chain is ATPase inhibitor, mitochondrial (109 aa).

A mitochondrion-targeting transit peptide spans 1 to 22 (MAGSSSLLRAGIRNVLLMQMRR). Positions 27–56 (LGELGKGAGKGGGGGGSVREAGGAFGKRQA) are N-terminal inhibitory region. The interval 27–109 (LGELGKGAGK…KSKIKKLNDD (83 aa)) is disordered. Over residues 30-43 (LGKGAGKGGGGGGS) the composition is skewed to gly residues. 2 stretches are compositionally biased toward basic and acidic residues: residues 55-69 (QAAE…KEQE) and 77-98 (HHEE…EIER). Residues 71–109 (IASLRKHHEEEIRHHKGEIERLQKEIERHKSKIKKLNDD) adopt a coiled-coil conformation. Positions 78-109 (HEEEIRHHKGEIERLQKEIERHKSKIKKLNDD) are antiparallel alpha-helical coiled coil region. Residues 99 to 109 (HKSKIKKLNDD) show a composition bias toward basic residues.

It belongs to the ATPase inhibitor family. Homodimer; represents the active form and is present at a pH value below 6.5. Homotetramer; represents the inactive form and is present at a pH value above 7.0.

The protein resides in the mitochondrion. Endogenous F(1)F(o)-ATPase inhibitor limiting ATP depletion when the mitochondrial membrane potential falls below a threshold and the F(1)F(o)-ATP synthase starts hydrolyzing ATP to pump protons out of the mitochondrial matrix. Required to avoid the consumption of cellular ATP when the F(1)F(o)-ATP synthase enzyme acts as an ATP hydrolase. Indirectly acts as a regulator of heme synthesis in erythroid tissues: regulates heme synthesis by modulating the mitochondrial pH and redox potential, allowing fech to efficiently catalyze the incorporation of iron into protoporphyrin IX to produce heme. The sequence is that of ATPase inhibitor, mitochondrial from Xenopus tropicalis (Western clawed frog).